A 380-amino-acid polypeptide reads, in one-letter code: 3-dehydroquinate synthase (380 aa).

Residues 100-104 (GAASD), 124-125 (TT), K137, and K146 each bind NAD(+). Zn(2+) is bound by residues E179, H251, and H267. The interval 320 to 343 (YMQRDKKNMQSNDTDSDKDSREMP) is disordered.

This sequence belongs to the sugar phosphate cyclases superfamily. Dehydroquinate synthase family. NAD(+) serves as cofactor. It depends on Co(2+) as a cofactor. Zn(2+) is required as a cofactor.

The protein resides in the cytoplasm. It catalyses the reaction 7-phospho-2-dehydro-3-deoxy-D-arabino-heptonate = 3-dehydroquinate + phosphate. Its pathway is metabolic intermediate biosynthesis; chorismate biosynthesis; chorismate from D-erythrose 4-phosphate and phosphoenolpyruvate: step 2/7. Functionally, catalyzes the conversion of 3-deoxy-D-arabino-heptulosonate 7-phosphate (DAHP) to dehydroquinate (DHQ). In Tropheryma whipplei (strain Twist) (Whipple's bacillus), this protein is 3-dehydroquinate synthase.